A 225-amino-acid polypeptide reads, in one-letter code: NAD(P)H-quinone oxidoreductase subunit K, chloroplastic (225 aa).

Residues Cys-43, Cys-44, Cys-108, and Cys-139 each coordinate [4Fe-4S] cluster.

Belongs to the complex I 20 kDa subunit family. NDH is composed of at least 16 different subunits, 5 of which are encoded in the nucleus. [4Fe-4S] cluster serves as cofactor.

It is found in the plastid. The protein resides in the chloroplast thylakoid membrane. It catalyses the reaction a plastoquinone + NADH + (n+1) H(+)(in) = a plastoquinol + NAD(+) + n H(+)(out). The catalysed reaction is a plastoquinone + NADPH + (n+1) H(+)(in) = a plastoquinol + NADP(+) + n H(+)(out). Its function is as follows. NDH shuttles electrons from NAD(P)H:plastoquinone, via FMN and iron-sulfur (Fe-S) centers, to quinones in the photosynthetic chain and possibly in a chloroplast respiratory chain. The immediate electron acceptor for the enzyme in this species is believed to be plastoquinone. Couples the redox reaction to proton translocation, and thus conserves the redox energy in a proton gradient. This is NAD(P)H-quinone oxidoreductase subunit K, chloroplastic from Populus trichocarpa (Western balsam poplar).